A 573-amino-acid polypeptide reads, in one-letter code: Isocitrate dehydrogenase kinase/phosphatase (573 aa).

ATP is bound by residues 317–323 (APGVRGM) and Lys-338. The active site involves Asp-373.

This sequence belongs to the AceK family.

It is found in the cytoplasm. It carries out the reaction L-seryl-[isocitrate dehydrogenase] + ATP = O-phospho-L-seryl-[isocitrate dehydrogenase] + ADP + H(+). In terms of biological role, bifunctional enzyme which can phosphorylate or dephosphorylate isocitrate dehydrogenase (IDH) on a specific serine residue. This is a regulatory mechanism which enables bacteria to bypass the Krebs cycle via the glyoxylate shunt in response to the source of carbon. When bacteria are grown on glucose, IDH is fully active and unphosphorylated, but when grown on acetate or ethanol, the activity of IDH declines drastically concomitant with its phosphorylation. The protein is Isocitrate dehydrogenase kinase/phosphatase of Pseudomonas fluorescens (strain Pf0-1).